The sequence spans 593 residues: MFYYPNVLQRHTGCFATIWLAATRGSRLVKREYLKVNVVKTCEEILNYVLVRVQPPMPGLPRPRFSLYLSAQLQIGVIRVYFQQCQYLVEDIQHILEHLHRAQLRIRIDMEEADLPSLLLPNCLAMMETLEDAPEPFFGTMSVDPTLPSPFDIPQIRHLLEAATPEKIREETLPEATPEPRKPDRTLAMVQSPEVITLQEAEPIRMLRIEGEQDLPEISRGDLDLLIAEEDDAILLEERQRGRLLRQRRASPPLDESKEEPRALEGDGLVSSLSPPAPAQVEGIREPLPDQAFPPEVQKMPGWEPGVLLTEVTPPQELRLPAPPSIEKRPPSPQRPPRRRRRGRQLLFWDKETQISREKFEEQLQTGAHCCEYPVVQPPKRKLMSPAELFRTPTLSGWLSPELLALWTHCAQVPPRMLRQRPQLETEETVEEERVADKEERRKTEALSEIEVLREAQEPSGPLMLSSELSLEVAEEEKSRTSFIPPEERWAWIEERQPEPPALPMLPELPEVPMEMPPGPELLSSEAVLRAVALELQANREPDFSSLVPPLSSRKLASRVFYLLLVLSAQKILLVDQQKPYGRLLIRLGPKFP.

A Phosphoserine modification is found at Ser149. Residue Thr164 is modified to Phosphothreonine. Ser192 carries the post-translational modification Phosphoserine. 3 disordered regions span residues 247–282, 317–344, and 422–444; these read QRRA…AQVE, ELRL…RRGR, and PQLE…RRKT. Residues 255–265 show a composition bias toward basic and acidic residues; it reads DESKEEPRALE. Positions 432-444 are enriched in basic and acidic residues; that stretch reads EERVADKEERRKT.

The protein belongs to the rad21 family. In terms of assembly, interacts (phosphorylated and unphosphorylated form) with SMC3. Interacts with SYCP3. Interacts (phosphorylated and unphosphorylated form) with SMC1B. Does not interact with SMC1A. Interacts with RAD51. Forms a complex with EWSR1, PRDM9, SYCP3 and SYCP1; complex formation is dependent of phosphorylated form of REC8 and requires PRDM9 bound to hotspot DNA; EWSR1 joins PRDM9 with the chromosomal axis through REC8. In terms of processing, phosphorylated.

It localises to the nucleus. Its subcellular location is the chromosome. It is found in the centromere. Required during meiosis for separation of sister chromatids and homologous chromosomes. Proteolytic cleavage of REC8 on chromosome arms by separin during anaphase I allows for homologous chromosome separation in meiosis I and cleavage of REC8 on centromeres during anaphase II allows for sister chromatid separation in meiosis II. The chain is Meiotic recombination protein REC8 homolog from Rattus norvegicus (Rat).